Here is a 131-residue protein sequence, read N- to C-terminus: Profilin (131 aa).

Belongs to the profilin family. As to quaternary structure, occurs in many kinds of cells as a complex with monomeric actin in a 1:1 ratio.

Its subcellular location is the cytoplasm. It is found in the cytoskeleton. Its function is as follows. Binds to actin and affects the structure of the cytoskeleton. At high concentrations, profilin prevents the polymerization of actin, whereas it enhances it at low concentrations. By binding to PIP2, it inhibits the formation of IP3 and DG. The sequence is that of Profilin from Prunus persica (Peach).